Reading from the N-terminus, the 437-residue chain is 3-deoxy-D-manno-octulosonic acid transferase (437 aa).

The chain crosses the membrane as a helical; Signal-anchor span at residues 16-36 (VVLVCAFVIALPKLLYKMLVY). Glu70 (proton acceptor) is an active-site residue. Residues 279–280 (PR), 319–321 (IGL), and 346–349 (NLLE) contribute to the CMP site.

This sequence belongs to the glycosyltransferase group 1 family. Glycosyltransferase 30 subfamily.

The protein localises to the cell inner membrane. It catalyses the reaction lipid IVA (E. coli) + CMP-3-deoxy-beta-D-manno-octulosonate = alpha-Kdo-(2-&gt;6)-lipid IVA (E. coli) + CMP + H(+). The catalysed reaction is alpha-Kdo-(2-&gt;6)-lipid IVA (E. coli) + CMP-3-deoxy-beta-D-manno-octulosonate = alpha-Kdo-(2-&gt;4)-alpha-Kdo-(2-&gt;6)-lipid IVA (E. coli) + CMP + H(+). The enzyme catalyses alpha-Kdo-(2-&gt;4)-alpha-Kdo-(2-&gt;6)-lipid IVA (E. coli) + CMP-3-deoxy-beta-D-manno-octulosonate = alpha-Kdo-(2-&gt;8)-alpha-Kdo-(2-&gt;4)-alpha-Kdo-(2-&gt;6)-lipid IVA (E. coli) + CMP + H(+). The protein operates within bacterial outer membrane biogenesis; LPS core biosynthesis. In terms of biological role, involved in lipopolysaccharide (LPS) biosynthesis. Catalyzes the transfer of three 3-deoxy-D-manno-octulosonate (Kdo) residues from CMP-Kdo to lipid IV(A), the tetraacyldisaccharide-1,4'-bisphosphate precursor of lipid A. Thus generates the genus-specific LPS epitope of Chlamydia, composed of the trisaccharide alpha-Kdo-(2-&gt;8)-alpha-Kdo-(2-&gt;4)-alpha-Kdo. The protein is 3-deoxy-D-manno-octulosonic acid transferase (waaA) of Chlamydia pneumoniae (Chlamydophila pneumoniae).